Here is an 804-residue protein sequence, read N- to C-terminus: Phenylalanine--tRNA ligase beta subunit (804 aa).

A tRNA-binding domain is found at Arg-38–Ala-148. The B5 domain occupies His-401–Pro-476. 4 residues coordinate Mg(2+): Asp-454, Asp-460, Glu-463, and Glu-464. An FDX-ACB domain is found at Ser-710–Arg-803.

Belongs to the phenylalanyl-tRNA synthetase beta subunit family. Type 1 subfamily. In terms of assembly, tetramer of two alpha and two beta subunits. Mg(2+) serves as cofactor.

The protein localises to the cytoplasm. The enzyme catalyses tRNA(Phe) + L-phenylalanine + ATP = L-phenylalanyl-tRNA(Phe) + AMP + diphosphate + H(+). The polypeptide is Phenylalanine--tRNA ligase beta subunit (Brucella suis biovar 1 (strain 1330)).